A 498-amino-acid polypeptide reads, in one-letter code: DEAD-box ATP-dependent RNA helicase 12 (498 aa).

Positions 1 to 114 (MNTNRGRYPP…RLPPPDTRYQ (114 aa)) are disordered. Low complexity predominate over residues 27-65 (SYRQQQPPQDQQYVQRGYSQNPQQMQLQQQHQQQQQQQQ). Residues 74 to 96 (GNASNANEVVQQTTQPEASSDAN) show a composition bias toward polar residues. Positions 124–152 (NEFEDYFLKRDLLKGIYEKGFEKPSPIQE) match the Q motif motif. Residues 155 to 325 (IPIALTGSDI…DRHLRKPYVI (171 aa)) enclose the Helicase ATP-binding domain. 168 to 175 (AKNGTGKT) contacts ATP. Residue T230 is modified to Phosphothreonine. A DEAD box motif is present at residues 273 to 276 (DEAD). The Helicase C-terminal domain occupies 335 to 495 (GVTQYYAFVE…PIPSNIDQAI (161 aa)).

Belongs to the DEAD box helicase family. DDX6/DHH1 subfamily.

The protein localises to the cytoplasm. The protein resides in the P-body. The enzyme catalyses ATP + H2O = ADP + phosphate + H(+). Functionally, ATP-dependent RNA helicase involved in mRNA turnover, and more specifically in mRNA decapping. This Arabidopsis thaliana (Mouse-ear cress) protein is DEAD-box ATP-dependent RNA helicase 12 (RH12).